Reading from the N-terminus, the 137-residue chain is Putative pre-16S rRNA nuclease (137 aa).

It belongs to the YqgF nuclease family.

It localises to the cytoplasm. Could be a nuclease involved in processing of the 5'-end of pre-16S rRNA. This is Putative pre-16S rRNA nuclease from Chromobacterium violaceum (strain ATCC 12472 / DSM 30191 / JCM 1249 / CCUG 213 / NBRC 12614 / NCIMB 9131 / NCTC 9757 / MK).